Here is a 510-residue protein sequence, read N- to C-terminus: Light-independent protochlorophyllide reductase subunit B (510 aa).

A [4Fe-4S] cluster-binding site is contributed by aspartate 36. Catalysis depends on aspartate 297, which acts as the Proton donor. Residue 432-433 (GM) participates in substrate binding.

The protein belongs to the ChlB/BchB/BchZ family. In terms of assembly, protochlorophyllide reductase is composed of three subunits; ChlL, ChlN and ChlB. Forms a heterotetramer of two ChlB and two ChlN subunits. The cofactor is [4Fe-4S] cluster.

Its subcellular location is the plastid. It localises to the chloroplast. It carries out the reaction chlorophyllide a + oxidized 2[4Fe-4S]-[ferredoxin] + 2 ADP + 2 phosphate = protochlorophyllide a + reduced 2[4Fe-4S]-[ferredoxin] + 2 ATP + 2 H2O. It participates in porphyrin-containing compound metabolism; chlorophyll biosynthesis (light-independent). In terms of biological role, component of the dark-operative protochlorophyllide reductase (DPOR) that uses Mg-ATP and reduced ferredoxin to reduce ring D of protochlorophyllide (Pchlide) to form chlorophyllide a (Chlide). This reaction is light-independent. The NB-protein (ChlN-ChlB) is the catalytic component of the complex. This Pinus koraiensis (Korean pine) protein is Light-independent protochlorophyllide reductase subunit B.